The primary structure comprises 232 residues: tRNA1(Val) (adenine(37)-N6)-methyltransferase (232 aa).

It belongs to the methyltransferase superfamily. tRNA (adenine-N(6)-)-methyltransferase family.

Its subcellular location is the cytoplasm. The catalysed reaction is adenosine(37) in tRNA1(Val) + S-adenosyl-L-methionine = N(6)-methyladenosine(37) in tRNA1(Val) + S-adenosyl-L-homocysteine + H(+). Specifically methylates the adenine in position 37 of tRNA(1)(Val) (anticodon cmo5UAC). This Haemophilus influenzae (strain PittGG) protein is tRNA1(Val) (adenine(37)-N6)-methyltransferase.